The following is a 469-amino-acid chain: Cell division protein FtsP (469 aa).

The tat-type signal signal peptide spans 1-29 (MPRLSRRQLLKTAAISTALSTVPAPLLAA). One can recognise a Plastocyanin-like domain in the interval 228–286 (IRLRLLNASLARAYDLRLDNDQEMLLIAQDLSFLPKAKSVKSLVLSPGERAEILVNMNE).

Belongs to the FtsP family. Predicted to be exported by the Tat system. The position of the signal peptide cleavage has not been experimentally proven.

The protein resides in the periplasm. In terms of biological role, cell division protein that is required for growth during stress conditions. May be involved in protecting or stabilizing the divisomal assembly under conditions of stress. This is Cell division protein FtsP from Haemophilus influenzae (strain 86-028NP).